The chain runs to 160 residues: 3-hydroxyacyl-[acyl-carrier-protein] dehydratase FabZ (160 aa).

The active site involves His63.

The protein belongs to the thioester dehydratase family. FabZ subfamily.

It localises to the cytoplasm. It carries out the reaction a (3R)-hydroxyacyl-[ACP] = a (2E)-enoyl-[ACP] + H2O. Involved in unsaturated fatty acids biosynthesis. Catalyzes the dehydration of short chain beta-hydroxyacyl-ACPs and long chain saturated and unsaturated beta-hydroxyacyl-ACPs. This chain is 3-hydroxyacyl-[acyl-carrier-protein] dehydratase FabZ, found in Xylella fastidiosa (strain M23).